The sequence spans 187 residues: Large ribosomal subunit protein uL5 (187 aa).

It belongs to the universal ribosomal protein uL5 family. In terms of assembly, part of the 50S ribosomal subunit; part of the 5S rRNA/L5/L18/L25 subcomplex. Contacts the 5S rRNA and the P site tRNA. Forms a bridge to the 30S subunit in the 70S ribosome.

Its function is as follows. This is one of the proteins that bind and probably mediate the attachment of the 5S RNA into the large ribosomal subunit, where it forms part of the central protuberance. In the 70S ribosome it contacts protein S13 of the 30S subunit (bridge B1b), connecting the 2 subunits; this bridge is implicated in subunit movement. Contacts the P site tRNA; the 5S rRNA and some of its associated proteins might help stabilize positioning of ribosome-bound tRNAs. The polypeptide is Large ribosomal subunit protein uL5 (Mycolicibacterium paratuberculosis (strain ATCC BAA-968 / K-10) (Mycobacterium paratuberculosis)).